Consider the following 695-residue polypeptide: MAQLDTLDLVVLVALLVGSVAYFTKGTYWAVAKDPYASSGPAMNGAAKAGKTRDILEKMEETGKNCVIFYGSQTGTAEDYASRLAKEGSQRFGLKTMVADLEDYDYENLDKFPEDKVAFFVLATYGEGEPTDNAVEFYQFITGEDVAFESGASAEEKPLSALKYVTFGLGNNTYEHYNAMVRNLDAALQKLGAQRIGSAGEGDDGAGTMEEDFLAWKEPMWTALSEAMGLQEREAVYEPVFNVTEDESKSAEDETVYLGEPTKGHLEGQPKGPFSAHNPFIAPIVESRELFTVKDRNCLHMEISIAGSNLTYQTGDHIAVWPTNAGAEVDRFLQVFGLEEKRHSVINIKGIDVTAKVPIPTPTTYDAAVRYYMEVCAPVSRQFVSSLAAFAPDEATKTEIQRLGSDKDYFHEKITNQCFNIAQALQSITSKPFSAVPFSLLIEGLNKLQPRYYSISSSSLVQKDKISITAVVESVRLPGASHLVKGVTTNYLLALKQKQNGEPSPDPHGLTYAITGPRNKYDGIHVPVHVRHSNFKLPSDPSRPIIMVGPGTGVAPFRGFIQERAALAAKGEKVGTTVLFFGCRNRNEDFLYQDEFKAYEEQLGDSLKIITAFSRETSQKVYVQHRLREQAELVSDLLKQKATFYVCGDAANMAREVNLVLGQIIAQQRGLPAEKGEEMVKHMRSSGSYQEDVWS.

Residues 1–8 (MAQLDTLD) are Lumenal-facing. Residues 9–31 (LVVLVALLVGSVAYFTKGTYWAV) traverse the membrane as a helical segment. Residues 32 to 695 (AKDPYASSGP…SGSYQEDVWS (664 aa)) lie on the Cytoplasmic side of the membrane. The Flavodoxin-like domain occupies 66 to 221 (CVIFYGSQTG…DFLAWKEPMW (156 aa)). Residues 72–77 (SQTGTA), 123–126 (ATYG), 169–178 (LGNNTYEHYN), and aspartate 204 contribute to the FMN site. The FAD-binding FR-type domain maps to 277-538 (HNPFIAPIVE…HVRHSNFKLP (262 aa)). Arginine 296 lines the NADP(+) pocket. FAD-binding positions include 451–454 (RYYS), 469–471 (TAV), and 486–489 (GVTT). NADP(+)-binding positions include threonine 552, 614 to 615 (SR), 620 to 624 (KVYVQ), and glutamate 656. Tryptophan 694 lines the FAD pocket.

It belongs to the NADPH--cytochrome P450 reductase family. This sequence in the N-terminal section; belongs to the flavodoxin family. The protein in the C-terminal section; belongs to the flavoprotein pyridine nucleotide cytochrome reductase family. It depends on FAD as a cofactor. The cofactor is FMN.

Its subcellular location is the endoplasmic reticulum membrane. The protein resides in the mitochondrion outer membrane. It is found in the cell membrane. The enzyme catalyses 2 oxidized [cytochrome P450] + NADPH = 2 reduced [cytochrome P450] + NADP(+) + H(+). In terms of biological role, this enzyme is required for electron transfer from NADP to cytochrome P450 in microsomes. It can also provide electron transfer to heme oxygenase and cytochrome B5. Involved in ergosterol biosynthesis. In Aspergillus oryzae (strain ATCC 42149 / RIB 40) (Yellow koji mold), this protein is NADPH--cytochrome P450 reductase.